The primary structure comprises 951 residues: AP-1 complex subunit beta-1 (951 aa).

At K318 the chain carries N6-acetyllysine. Y574 carries the 3'-nitrotyrosine modification.

This sequence belongs to the adaptor complexes large subunit family. Adaptor protein complex 1 (AP-1) is a heterotetramer composed of two large adaptins (gamma-type subunit AP1G1 and beta-type subunit AP1B1), a medium adaptin (mu-type subunit AP1M1 or AP1M2) and a small adaptin (sigma-type subunit AP1S1 or AP1S2 or AP1S3).

It is found in the cytoplasmic vesicle. Its subcellular location is the clathrin-coated vesicle membrane. The protein localises to the golgi apparatus. In terms of biological role, subunit of clathrin-associated adaptor protein complex 1 that plays a role in protein sorting in the late-Golgi/trans-Golgi network (TGN) and/or endosomes. The AP complexes mediate both the recruitment of clathrin to membranes and the recognition of sorting signals within the cytosolic tails of transmembrane cargo molecules. This is AP-1 complex subunit beta-1 (AP2B1) from Bos taurus (Bovine).